Reading from the N-terminus, the 487-residue chain is Malonate-semialdehyde dehydrogenase 3 (487 aa).

NAD(+) contacts are provided by Phe-154, Lys-178, Glu-181, Arg-182, and Ser-231. Cys-286 acts as the Nucleophile in catalysis. Glu-386 is a binding site for NAD(+).

It belongs to the aldehyde dehydrogenase family. IolA subfamily. In terms of assembly, homotetramer.

The enzyme catalyses 3-oxopropanoate + NAD(+) + CoA + H2O = hydrogencarbonate + acetyl-CoA + NADH + H(+). The catalysed reaction is 2-methyl-3-oxopropanoate + NAD(+) + CoA + H2O = propanoyl-CoA + hydrogencarbonate + NADH + H(+). Its pathway is polyol metabolism; myo-inositol degradation into acetyl-CoA; acetyl-CoA from myo-inositol: step 7/7. Functionally, catalyzes the oxidation of malonate semialdehyde (MSA) and methylmalonate semialdehyde (MMSA) into acetyl-CoA and propanoyl-CoA, respectively. Is involved in a myo-inositol catabolic pathway. Bicarbonate, and not CO2, is the end-product of the enzymatic reaction. This Bacillus cereus (strain ZK / E33L) protein is Malonate-semialdehyde dehydrogenase 3.